A 347-amino-acid chain; its full sequence is Probable replication factor C subunit 5 (347 aa).

64 to 71 (GPPGTGKT) provides a ligand contact to ATP.

This sequence belongs to the activator 1 small subunits family. Heteropentamer of various rfc subunits that forms a complex (RFC) with PCNA in the presence of ATP.

The protein localises to the nucleus. Functionally, the elongation of primed DNA templates by DNA polymerase delta and epsilon requires the action of the accessory proteins PCNA and activator 1. The polypeptide is Probable replication factor C subunit 5 (rfc5) (Dictyostelium discoideum (Social amoeba)).